A 147-amino-acid chain; its full sequence is Hemoglobin subunit beta (147 aa).

V2 bears the N-acetylvaline mark. One can recognise a Globin domain in the interval 3-147 (HLSGSEKTAV…VSHALAHKYH (145 aa)). T13 carries the phosphothreonine modification. S45 is modified (phosphoserine). An N6-acetyllysine modification is found at K60. Position 64 (H64) interacts with heme b. K83 bears the N6-acetyllysine mark. Residue H93 participates in heme b binding. C94 carries the post-translational modification S-nitrosocysteine. An N6-acetyllysine modification is found at K145.

This sequence belongs to the globin family. As to quaternary structure, heterotetramer of two alpha chains and two beta chains. As to expression, red blood cells.

Functionally, involved in oxygen transport from the lung to the various peripheral tissues. The chain is Hemoglobin subunit beta (HBB) from Tachyglossus aculeatus aculeatus (Southeast Australian short-beaked echidna).